Reading from the N-terminus, the 311-residue chain is 4-hydroxy-tetrahydrodipicolinate synthase (311 aa).

Residue Thr51 coordinates pyruvate. Catalysis depends on Tyr140, which acts as the Proton donor/acceptor. The active-site Schiff-base intermediate with substrate is the Lys168. Ile209 provides a ligand contact to pyruvate.

The protein belongs to the DapA family. Homotetramer; dimer of dimers.

Its subcellular location is the cytoplasm. It carries out the reaction L-aspartate 4-semialdehyde + pyruvate = (2S,4S)-4-hydroxy-2,3,4,5-tetrahydrodipicolinate + H2O + H(+). The protein operates within amino-acid biosynthesis; L-lysine biosynthesis via DAP pathway; (S)-tetrahydrodipicolinate from L-aspartate: step 3/4. Catalyzes the condensation of (S)-aspartate-beta-semialdehyde [(S)-ASA] and pyruvate to 4-hydroxy-tetrahydrodipicolinate (HTPA). This chain is 4-hydroxy-tetrahydrodipicolinate synthase, found in Streptococcus gordonii (strain Challis / ATCC 35105 / BCRC 15272 / CH1 / DL1 / V288).